The following is a 140-amino-acid chain: MIDIQGIKEALPHRYPMLLVDRVLEVSEDTIVAIKNVTINEPFFNGHFPQYPVMPGVLIMEALAQTAGVLELSKPENKGKLVFYAGMDKVKFKKQVVPGDQLVMTATFVKRRGTIAVVEAKAEVDGKLAASGILTFAIGN.

His47 is a catalytic residue.

This sequence belongs to the thioester dehydratase family. FabZ subfamily.

It is found in the cytoplasm. It carries out the reaction a (3R)-hydroxyacyl-[ACP] = a (2E)-enoyl-[ACP] + H2O. In terms of biological role, involved in unsaturated fatty acids biosynthesis. Catalyzes the dehydration of short chain beta-hydroxyacyl-ACPs and long chain saturated and unsaturated beta-hydroxyacyl-ACPs. The polypeptide is 3-hydroxyacyl-[acyl-carrier-protein] dehydratase FabZ (Streptococcus pneumoniae serotype 2 (strain D39 / NCTC 7466)).